A 219-amino-acid chain; its full sequence is Ribose-5-phosphate isomerase A (219 aa).

Substrate contacts are provided by residues 28–31 (SGST), 81–84 (DGAD), and 94–97 (KGGG). E103 serves as the catalytic Proton acceptor. Substrate is bound at residue K121.

It belongs to the ribose 5-phosphate isomerase family. Homodimer.

The catalysed reaction is aldehydo-D-ribose 5-phosphate = D-ribulose 5-phosphate. It functions in the pathway carbohydrate degradation; pentose phosphate pathway; D-ribose 5-phosphate from D-ribulose 5-phosphate (non-oxidative stage): step 1/1. In terms of biological role, catalyzes the reversible conversion of ribose-5-phosphate to ribulose 5-phosphate. The protein is Ribose-5-phosphate isomerase A of Mannheimia succiniciproducens (strain KCTC 0769BP / MBEL55E).